The primary structure comprises 1380 residues: Receptor-type adenylate cyclase A (1380 aa).

Residues 1–34 (MAMQIRPSLGGCLRHGGAGDHAARRLSRLRAAKV) are Cytoplasmic-facing. The helical transmembrane segment at 35 to 55 (FVPTAVVCVLLCCAPWVMAEI) threads the bilayer. Topologically, residues 56 to 891 (TNDAEREPVY…SHALTPAQRN (836 aa)) are extracellular. 4 N-linked (GlcNAc...) asparagine glycosylation sites follow: asparagine 422, asparagine 478, asparagine 497, and asparagine 567. A helical transmembrane segment spans residues 892–912 (GLIAGCVVGAVVLIATCTLLL). The Cytoplasmic portion of the chain corresponds to 913–1380 (YCCMDNRNND…NPHYARHAFE (468 aa)). The region spanning 933–1087 (TLLFTDIESS…DTSNMAARTE (155 aa)) is the Guanylate cyclase domain. Aspartate 938 and aspartate 981 together coordinate Mg(2+). Residues 1270–1298 (LAREGDSAAGGVRPRLPGSPVTSLPAGGS) form a disordered region.

This sequence belongs to the adenylyl cyclase class-3 family. Mg(2+) is required as a cofactor.

The protein resides in the membrane. It catalyses the reaction ATP = 3',5'-cyclic AMP + diphosphate. Functionally, could act as a receptor for an unknown ligand. The polypeptide is Receptor-type adenylate cyclase A (RAC-A) (Leishmania donovani).